A 556-amino-acid polypeptide reads, in one-letter code: Glucose-6-phosphate isomerase (556 aa).

Glu360 serves as the catalytic Proton donor. Active-site residues include His391 and Lys519.

This sequence belongs to the GPI family.

Its subcellular location is the cytoplasm. It carries out the reaction alpha-D-glucose 6-phosphate = beta-D-fructose 6-phosphate. The protein operates within carbohydrate biosynthesis; gluconeogenesis. It participates in carbohydrate degradation; glycolysis; D-glyceraldehyde 3-phosphate and glycerone phosphate from D-glucose: step 2/4. Functionally, catalyzes the reversible isomerization of glucose-6-phosphate to fructose-6-phosphate. The sequence is that of Glucose-6-phosphate isomerase from Acinetobacter baumannii (strain ATCC 17978 / DSM 105126 / CIP 53.77 / LMG 1025 / NCDC KC755 / 5377).